Reading from the N-terminus, the 223-residue chain is Glycolipid transfer protein 2 (223 aa).

A ganglioside GM3 (d18:1(4E))-binding residues include aspartate 69, asparagine 73, tryptophan 116, and histidine 155.

This sequence belongs to the GLTP family.

In terms of biological role, transfers glycolipids in vitro. The protein is Glycolipid transfer protein 2 of Arabidopsis thaliana (Mouse-ear cress).